A 353-amino-acid chain; its full sequence is Histidinol-phosphate aminotransferase (353 aa).

The residue at position 209 (Lys-209) is an N6-(pyridoxal phosphate)lysine.

It belongs to the class-II pyridoxal-phosphate-dependent aminotransferase family. Histidinol-phosphate aminotransferase subfamily. Homodimer. The cofactor is pyridoxal 5'-phosphate.

It catalyses the reaction L-histidinol phosphate + 2-oxoglutarate = 3-(imidazol-4-yl)-2-oxopropyl phosphate + L-glutamate. Its pathway is amino-acid biosynthesis; L-histidine biosynthesis; L-histidine from 5-phospho-alpha-D-ribose 1-diphosphate: step 7/9. The chain is Histidinol-phosphate aminotransferase from Buchnera aphidicola subsp. Cinara cedri (strain Cc).